The sequence spans 103 residues: Protein S100-A16 (103 aa).

The 36-residue stretch at 12 to 47 (VIVLVENFYKYVSKYSLVKNKISKSSFREMLQKELN) folds into the EF-hand 1; degenerate domain. The region spanning 54 to 89 (GNRKAADKLIQNLDANHDGRISFDEYWTLIGGITGP) is the EF-hand 2 domain. Positions 67, 69, 71, 73, and 78 each coordinate Ca(2+).

The protein belongs to the S-100 family. Homodimer. Interacts with TP53. Ubiquitous. Highly expressed in esophagus, adipose tissues and colon. Expressed at lower level in lung, brain, pancreas and skeletal muscle. Expression is up-regulated in tumors of bladder, lung, thyroid gland, pancreas and ovary. Expressed in astrocytes.

Its subcellular location is the nucleus. It localises to the nucleolus. The protein localises to the cytoplasm. Functionally, calcium-binding protein. Binds one calcium ion per monomer. Can promote differentiation of adipocytes (in vitro). Overexpression in preadipocytes increases their proliferation, enhances adipogenesis and reduces insulin-stimulated glucose uptake. This chain is Protein S100-A16, found in Homo sapiens (Human).